The sequence spans 168 residues: ATP synthase F(1) complex subunit delta, mitochondrial (168 aa).

A mitochondrion-targeting transit peptide spans 1-22; the sequence is MLPASLLRHPGLRRLMLQARTY. K136 and K165 each carry N6-acetyllysine; alternate. 2 positions are modified to N6-succinyllysine; alternate: K136 and K165.

This sequence belongs to the ATPase epsilon chain family. In terms of assembly, component of the ATP synthase complex composed at least of ATP5F1A/subunit alpha, ATP5F1B/subunit beta, ATP5MC1/subunit c (homooctomer), MT-ATP6/subunit a, MT-ATP8/subunit 8, ATP5ME/subunit e, ATP5MF/subunit f, ATP5MG/subunit g, ATP5MK/subunit k, ATP5MJ/subunit j, ATP5F1C/subunit gamma, ATP5F1D/subunit delta, ATP5F1E/subunit epsilon, ATP5PF/subunit F6, ATP5PB/subunit b, ATP5PD/subunit d, ATP5PO/subunit OSCP. ATP synthase complex consists of a soluble F(1) head domain (subunits alpha(3) and beta(3)) - the catalytic core - and a membrane F(0) domain - the membrane proton channel (subunits c, a, 8, e, f, g, k and j). These two domains are linked by a central stalk (subunits gamma, delta, and epsilon) rotating inside the F1 region and a stationary peripheral stalk (subunits F6, b, d, and OSCP). Component of a complex composed at least by ATPIF1, ATP5F1A, ATP5F1B, ATP5F1C AND ATP5F1E.

The protein resides in the mitochondrion. It is found in the mitochondrion inner membrane. In terms of biological role, subunit delta, of the mitochondrial membrane ATP synthase complex (F(1)F(0) ATP synthase or Complex V) that produces ATP from ADP in the presence of a proton gradient across the membrane which is generated by electron transport complexes of the respiratory chain. ATP synthase complex consist of a soluble F(1) head domain - the catalytic core - and a membrane F(1) domain - the membrane proton channel. These two domains are linked by a central stalk rotating inside the F(1) region and a stationary peripheral stalk. During catalysis, ATP synthesis in the catalytic domain of F(1) is coupled via a rotary mechanism of the central stalk subunits to proton translocation. In vivo, can only synthesize ATP although its ATP hydrolase activity can be activated artificially in vitro. With the central stalk subunit gamma, is essential for the biogenesis of F(1) catalytic part of the ATP synthase complex namely in the formation of F1 assembly intermediate. This is ATP synthase F(1) complex subunit delta, mitochondrial from Mus musculus (Mouse).